The sequence spans 224 residues: UPF0758 protein lwe1562 (224 aa).

The region spanning 102–224 (VIRCPDDAVK…YISLKEKGYF (123 aa)) is the MPN domain. Residues His173, His175, and Asp186 each coordinate Zn(2+). Positions 173 to 186 (HNHPSGDPTPSSED) match the JAMM motif motif.

The protein belongs to the UPF0758 family.

The protein is UPF0758 protein lwe1562 of Listeria welshimeri serovar 6b (strain ATCC 35897 / DSM 20650 / CCUG 15529 / CIP 8149 / NCTC 11857 / SLCC 5334 / V8).